The sequence spans 156 residues: Small ribosomal subunit protein uS7 (156 aa).

This sequence belongs to the universal ribosomal protein uS7 family. As to quaternary structure, part of the 30S ribosomal subunit. Contacts proteins S9 and S11.

One of the primary rRNA binding proteins, it binds directly to 16S rRNA where it nucleates assembly of the head domain of the 30S subunit. Is located at the subunit interface close to the decoding center, probably blocks exit of the E-site tRNA. The sequence is that of Small ribosomal subunit protein uS7 from Anaeromyxobacter sp. (strain Fw109-5).